A 445-amino-acid polypeptide reads, in one-letter code: MKIKVISRSEEEETKEKASDVRKLHRNLDPNLHPFERPREYVRALNATKLDRVFAKPFIGSLSGHTDGIFTMTRHPTLLNNVASGSCDGVIKLWNLTSLTERTTVQAHNGFVRGLVFTPDGKHMVSCGEDKTIKMWKLDLPEYTFNQEVISIYNGKNAFTSIDHQLNSTTFATSGPTSVEIWKHQRSTPIQTLQWGHSTITKVKFNPIETHLLASCTTDRDIILYDIRENSPAQKLTTSMRSNSIAWCPTESFTLAIANEDENVYQYDIRNLSKAMTVHRDHVGSVLDIDYSPTGREIVSGSYDKTIRIFPVDSYKSREVYYTNRMQRIFSVLFTADSRFILSGSDDMNIRVWKANSSAPLGILSNREKEKLEYQDKIKEKFKEIPELKTIATHRRVPQLVYKRRFIKNEIHKAKQRRVKNISNNSGKSPKVEKVLSKHTIKVDN.

7 WD repeats span residues 64–104 (GHTD…ERTT), 107–146 (AHNGFVRGLVFTPDGKHMVSCGEDKTIKMWKLDLPEYTFN), 154–192 (NGKNAFTSIDHQLNSTTFATSGPTSVEIWKHQRSTPIQT), 196–235 (GHSTITKVKFNPIETHLLASCTTDRDIILYDIRENSPAQK), 237–277 (TTSM…KAMT), 281–320 (DHVGSVLDIDYSPTGREIVSGSYDKTIRIFPVDSYKSREV), and 324–363 (NRMQRIFSVLFTADSRFILSGSDDMNIRVWKANSSAPLGI). The tract at residues 417 to 445 (RRVKNISNNSGKSPKVEKVLSKHTIKVDN) is disordered. Basic and acidic residues predominate over residues 430–445 (PKVEKVLSKHTIKVDN).

It belongs to the WD repeat DCAF13/WDSOF1 family.

Its subcellular location is the nucleus. It is found in the nucleolus. It functions in the pathway protein modification; protein ubiquitination. Its function is as follows. Possible role in ribosomal RNA processing. May function as a substrate receptor for CUL4-DDB1 E3 ubiquitin-protein ligase complex. This is DDB1- and CUL4-associated factor 13 (wdsof1) from Dictyostelium discoideum (Social amoeba).